The chain runs to 322 residues: AA9 family lytic polysaccharide monooxygenase A (322 aa).

Positions 1–15 are cleaved as a signal peptide; the sequence is MKVLSLLAAASAASA. Cu(2+) is bound by residues His-16 and His-96. 2 disulfides stabilise this stretch: Cys-54-Cys-182 and Cys-152-Cys-237. The O2 site is built by His-168 and Gln-177. O-linked (Man...) threonine glycosylation is found at Thr-228 and Thr-236. One can recognise a CBM1 domain in the interval 286 to 322; sequence CTAAQWAQCGGMGFSGCTTCASPYTCKKMNDYYSQCS.

It belongs to the polysaccharide monooxygenase AA9 family. It depends on Cu(2+) as a cofactor.

It localises to the secreted. The catalysed reaction is [(1-&gt;4)-beta-D-glucosyl]n+m + reduced acceptor + O2 = 4-dehydro-beta-D-glucosyl-[(1-&gt;4)-beta-D-glucosyl]n-1 + [(1-&gt;4)-beta-D-glucosyl]m + acceptor + H2O.. In terms of biological role, lytic polysaccharide monooxygenase (LPMO) that depolymerizes crystalline and amorphous polysaccharides via the oxidation of scissile alpha- or beta-(1-4)-glycosidic bonds, yielding C4 oxidation products. Catalysis by LPMOs requires the reduction of the active-site copper from Cu(II) to Cu(I) by a reducing agent and H(2)O(2) or O(2) as a cosubstrate. Active on tamarind xyloglucan and konjac glucomannan. This chain is AA9 family lytic polysaccharide monooxygenase A (gh61-1), found in Neurospora crassa (strain ATCC 24698 / 74-OR23-1A / CBS 708.71 / DSM 1257 / FGSC 987).